The following is a 103-amino-acid chain: Small ribosomal subunit protein uS14c (103 aa).

Positions 34–56 are disordered; it reads KVSPLSLSEKTKMQEKLQSLPRN.

Belongs to the universal ribosomal protein uS14 family. In terms of assembly, part of the 30S ribosomal subunit.

It is found in the plastid. It localises to the chloroplast. Functionally, binds 16S rRNA, required for the assembly of 30S particles. The sequence is that of Small ribosomal subunit protein uS14c from Saccharum hybrid (Sugarcane).